An 861-amino-acid polypeptide reads, in one-letter code: Leucine--tRNA ligase (861 aa).

The 'HIGH' region motif lies at Pro-42–His-52. Positions Lys-620–Ser-624 match the 'KMSKS' region motif. Residue Lys-623 participates in ATP binding.

It belongs to the class-I aminoacyl-tRNA synthetase family.

The protein localises to the cytoplasm. The enzyme catalyses tRNA(Leu) + L-leucine + ATP = L-leucyl-tRNA(Leu) + AMP + diphosphate. In Buchnera aphidicola subsp. Schizaphis graminum (strain Sg), this protein is Leucine--tRNA ligase.